The sequence spans 106 residues: Immunoglobulin lambda constant 3 (106 aa).

The Ig-like domain maps to 7–101 (PSVTLFPPSS…EGSTVEKTVA (95 aa)). A disulfide bond links cysteine 28 and cysteine 87.

Immunoglobulins are composed of two identical heavy chains and two identical light chains; disulfide-linked.

It is found in the secreted. It localises to the cell membrane. In terms of biological role, constant region of immunoglobulin light chains. Immunoglobulins, also known as antibodies, are membrane-bound or secreted glycoproteins produced by B lymphocytes. In the recognition phase of humoral immunity, the membrane-bound immunoglobulins serve as receptors which, upon binding of a specific antigen, trigger the clonal expansion and differentiation of B lymphocytes into immunoglobulins-secreting plasma cells. Secreted immunoglobulins mediate the effector phase of humoral immunity, which results in the elimination of bound antigens. The antigen binding site is formed by the variable domain of one heavy chain, together with that of its associated light chain. Thus, each immunoglobulin has two antigen binding sites with remarkable affinity for a particular antigen. The variable domains are assembled by a process called V-(D)-J rearrangement and can then be subjected to somatic hypermutations which, after exposure to antigen and selection, allow affinity maturation for a particular antigen. The protein is Immunoglobulin lambda constant 3 of Homo sapiens (Human).